The primary structure comprises 91 residues: Cell division protein CrgA (91 aa).

The segment covering 1–24 (MPKSKITTEGSALPQSSSSATNRT) has biased composition (polar residues). The segment at 1–28 (MPKSKITTEGSALPQSSSSATNRTPVKI) is disordered. The next 2 helical transmembrane spans lie at 38-58 (IAIM…NYLA) and 68-88 (LGPW…LMTM).

The protein belongs to the CrgA family.

Its subcellular location is the cell membrane. Involved in cell division. The polypeptide is Cell division protein CrgA (Corynebacterium aurimucosum (strain ATCC 700975 / DSM 44827 / CIP 107346 / CN-1) (Corynebacterium nigricans)).